We begin with the raw amino-acid sequence, 427 residues long: Serine--tRNA ligase 2 (427 aa).

Over residues 35 to 53 the composition is skewed to basic and acidic residues; that stretch reads RRRSEAQAEVTRLRTELNR. The disordered stretch occupies residues 35 to 72; sequence RRRSEAQAEVTRLRTELNRTSRARGRSGPPSEEEKEAA. L-serine is bound at residue 230–232; it reads TAE. 261–263 provides a ligand contact to ATP; sequence RAE. L-serine is bound at residue Glu284. An ATP-binding site is contributed by 348-351; it reads EISS. Ser383 contributes to the L-serine binding site.

This sequence belongs to the class-II aminoacyl-tRNA synthetase family. Type-1 seryl-tRNA synthetase subfamily. As to quaternary structure, homodimer. The tRNA molecule binds across the dimer.

The protein localises to the cytoplasm. It carries out the reaction tRNA(Ser) + L-serine + ATP = L-seryl-tRNA(Ser) + AMP + diphosphate + H(+). It catalyses the reaction tRNA(Sec) + L-serine + ATP = L-seryl-tRNA(Sec) + AMP + diphosphate + H(+). Its pathway is aminoacyl-tRNA biosynthesis; selenocysteinyl-tRNA(Sec) biosynthesis; L-seryl-tRNA(Sec) from L-serine and tRNA(Sec): step 1/1. Catalyzes the attachment of serine to tRNA(Ser). Is also able to aminoacylate tRNA(Sec) with serine, to form the misacylated tRNA L-seryl-tRNA(Sec), which will be further converted into selenocysteinyl-tRNA(Sec). The polypeptide is Serine--tRNA ligase 2 (Streptomyces avermitilis (strain ATCC 31267 / DSM 46492 / JCM 5070 / NBRC 14893 / NCIMB 12804 / NRRL 8165 / MA-4680)).